Consider the following 365-residue polypeptide: tRNA(Met) cytidine acetate ligase (365 aa).

ATP is bound by residues 7 to 20 (IAEFNPFHNGHKYL), G96, N152, and R175.

It belongs to the TmcAL family.

The protein resides in the cytoplasm. The enzyme catalyses cytidine(34) in elongator tRNA(Met) + acetate + ATP = N(4)-acetylcytidine(34) in elongator tRNA(Met) + AMP + diphosphate. Catalyzes the formation of N(4)-acetylcytidine (ac(4)C) at the wobble position of elongator tRNA(Met), using acetate and ATP as substrates. First activates an acetate ion to form acetyladenylate (Ac-AMP) and then transfers the acetyl group to tRNA to form ac(4)C34. The protein is tRNA(Met) cytidine acetate ligase of Streptococcus pneumoniae serotype 4 (strain ATCC BAA-334 / TIGR4).